The chain runs to 62 residues: Large ribosomal subunit protein bL33 (62 aa).

It belongs to the bacterial ribosomal protein bL33 family.

In Parabacteroides distasonis (strain ATCC 8503 / DSM 20701 / CIP 104284 / JCM 5825 / NCTC 11152), this protein is Large ribosomal subunit protein bL33.